We begin with the raw amino-acid sequence, 443 residues long: UDP-N-acetylmuramate--L-alanine ligase (443 aa).

110–116 (GAHGKTS) contacts ATP.

This sequence belongs to the MurCDEF family.

Its subcellular location is the cytoplasm. The catalysed reaction is UDP-N-acetyl-alpha-D-muramate + L-alanine + ATP = UDP-N-acetyl-alpha-D-muramoyl-L-alanine + ADP + phosphate + H(+). It functions in the pathway cell wall biogenesis; peptidoglycan biosynthesis. Cell wall formation. The polypeptide is UDP-N-acetylmuramate--L-alanine ligase (Streptococcus suis (strain 98HAH33)).